The primary structure comprises 373 residues: Probable peptidoglycan glycosyltransferase FtsW (373 aa).

9 helical membrane-spanning segments follow: residues Leu-15–Ala-35, Phe-48–Ala-68, Ala-80–Gly-100, Phe-144–Leu-164, Asp-168–Thr-188, Tyr-192–Asp-212, Leu-278–Val-298, Phe-311–Val-331, and Leu-342–Leu-362.

Belongs to the SEDS family. FtsW subfamily.

It localises to the cell inner membrane. The catalysed reaction is [GlcNAc-(1-&gt;4)-Mur2Ac(oyl-L-Ala-gamma-D-Glu-L-Lys-D-Ala-D-Ala)](n)-di-trans,octa-cis-undecaprenyl diphosphate + beta-D-GlcNAc-(1-&gt;4)-Mur2Ac(oyl-L-Ala-gamma-D-Glu-L-Lys-D-Ala-D-Ala)-di-trans,octa-cis-undecaprenyl diphosphate = [GlcNAc-(1-&gt;4)-Mur2Ac(oyl-L-Ala-gamma-D-Glu-L-Lys-D-Ala-D-Ala)](n+1)-di-trans,octa-cis-undecaprenyl diphosphate + di-trans,octa-cis-undecaprenyl diphosphate + H(+). The protein operates within cell wall biogenesis; peptidoglycan biosynthesis. Functionally, peptidoglycan polymerase that is essential for cell division. The chain is Probable peptidoglycan glycosyltransferase FtsW from Geobacter sulfurreducens (strain DL-1 / KN400).